Reading from the N-terminus, the 437-residue chain is mRNA cleavage and polyadenylation factor CLP1 (437 aa).

ATP is bound by residues Glu-23 and 122-127 (STGKSS).

Belongs to the Clp1 family. Clp1 subfamily. In terms of assembly, component of a pre-mRNA cleavage factor complex. Interacts directly with PCF11.

It localises to the nucleus. Required for endonucleolytic cleavage during polyadenylation-dependent pre-mRNA 3'-end formation. In Kluyveromyces lactis (strain ATCC 8585 / CBS 2359 / DSM 70799 / NBRC 1267 / NRRL Y-1140 / WM37) (Yeast), this protein is mRNA cleavage and polyadenylation factor CLP1.